A 346-amino-acid polypeptide reads, in one-letter code: MYNGSCCRIEGDTISQVMPPLLIVAFVLGALGNGVALCGFCFHMKTWKPSTVYLFNLAVADFLLMICLPFRTDYYLRRRHWAFGDIPCRVGLFTLAMNRAGSIVFLTVVAADRYFKVVHPHHAVNTISTRVAAGIVCTLWALVILGTVYLLLENHLCVQETAVSCESFIMESANGWHDIMFQLEFFMPLGIILFCSFKIVWSLRRRQQLARQARMKKATRFIMVVAIVFITCYLPSVSARLYFLWTVPSSACDPSVHGALHITLSFTYMNSMLDPLVYYFSSPSFPKFYNKLKICSLKPKQPGHSKTQRPEEMPISNLGRRSCISVANSFQSQSDGQWDPHIVEWH.

Residues 1 to 21 are Extracellular-facing; that stretch reads MYNGSCCRIEGDTISQVMPPL. Asparagine 3 carries an N-linked (GlcNAc...) asparagine glycan. A helical membrane pass occupies residues 22–42; the sequence is LIVAFVLGALGNGVALCGFCF. The Cytoplasmic segment spans residues 43-49; the sequence is HMKTWKP. Residues 50–70 traverse the membrane as a helical segment; it reads STVYLFNLAVADFLLMICLPF. At 71–89 the chain is on the extracellular side; it reads RTDYYLRRRHWAFGDIPCR. An intrachain disulfide couples cysteine 88 to cysteine 165. Residues 90 to 110 traverse the membrane as a helical segment; sequence VGLFTLAMNRAGSIVFLTVVA. Residues 111–130 lie on the Cytoplasmic side of the membrane; that stretch reads ADRYFKVVHPHHAVNTISTR. Residues 131 to 151 form a helical membrane-spanning segment; sequence VAAGIVCTLWALVILGTVYLL. Residues 152–182 are Extracellular-facing; the sequence is LENHLCVQETAVSCESFIMESANGWHDIMFQ. Residues 183-203 traverse the membrane as a helical segment; that stretch reads LEFFMPLGIILFCSFKIVWSL. Residues 204–220 lie on the Cytoplasmic side of the membrane; the sequence is RRRQQLARQARMKKATR. A helical membrane pass occupies residues 221-241; it reads FIMVVAIVFITCYLPSVSARL. At 242-261 the chain is on the extracellular side; that stretch reads YFLWTVPSSACDPSVHGALH. A helical membrane pass occupies residues 262–281; it reads ITLSFTYMNSMLDPLVYYFS. At 282–346 the chain is on the cytoplasmic side; sequence SPSFPKFYNK…QWDPHIVEWH (65 aa).

This sequence belongs to the G-protein coupled receptor 1 family. Expressed abundantly in brown and white fat. It also detectable at lower levels in liver, kidney, skeletal muscle, brain and pituitary. Not detected in frontal, temporal and occipital lobes of the cortex, basal forebrain, caudate nucleus, nucleus accumbens and hippocampus.

It is found in the cell membrane. In terms of biological role, acts as a receptor for L-lactate and mediates its anti-lipolytic effect through a G(i)-protein-mediated pathway. The chain is Hydroxycarboxylic acid receptor 1 (HCAR1) from Homo sapiens (Human).